We begin with the raw amino-acid sequence, 175 residues long: NADH-ubiquinone oxidoreductase chain 6 (175 aa).

The next 5 membrane-spanning stretches (helical) occupy residues 1-21 (MMLY…VGFS), 25-45 (SPIY…GIVL), 47-67 (FGGS…MMVV), 88-108 (AVLG…YYVL), and 149-169 (YGTW…VVIM).

This sequence belongs to the complex I subunit 6 family. As to quaternary structure, core subunit of respiratory chain NADH dehydrogenase (Complex I) which is composed of 45 different subunits.

It is found in the mitochondrion inner membrane. The catalysed reaction is a ubiquinone + NADH + 5 H(+)(in) = a ubiquinol + NAD(+) + 4 H(+)(out). Core subunit of the mitochondrial membrane respiratory chain NADH dehydrogenase (Complex I) which catalyzes electron transfer from NADH through the respiratory chain, using ubiquinone as an electron acceptor. Essential for the catalytic activity and assembly of complex I. The chain is NADH-ubiquinone oxidoreductase chain 6 (MT-ND6) from Bos mutus grunniens (Wild yak).